Consider the following 120-residue polypeptide: Ig heavy chain V region AC38 15.3 (120 aa).

The segment at 1-98 is v segment; that stretch reads QVQLLQPGTE…EDSAVYYCAR (98 aa). Cys22 and Cys96 are oxidised to a cystine. Residues 99–105 are d segment; it reads WDYEGDR. A j segment region spans residues 106 to 120; it reads YFDVWGTGTTVTVSS.

The polypeptide is Ig heavy chain V region AC38 15.3 (Mus musculus (Mouse)).